A 417-amino-acid polypeptide reads, in one-letter code: NADH-quinone oxidoreductase subunit D (417 aa).

The protein belongs to the complex I 49 kDa subunit family. In terms of assembly, NDH-1 is composed of 14 different subunits. Subunits NuoB, C, D, E, F, and G constitute the peripheral sector of the complex.

It is found in the cell inner membrane. The enzyme catalyses a quinone + NADH + 5 H(+)(in) = a quinol + NAD(+) + 4 H(+)(out). Functionally, NDH-1 shuttles electrons from NADH, via FMN and iron-sulfur (Fe-S) centers, to quinones in the respiratory chain. The immediate electron acceptor for the enzyme in this species is believed to be ubiquinone. Couples the redox reaction to proton translocation (for every two electrons transferred, four hydrogen ions are translocated across the cytoplasmic membrane), and thus conserves the redox energy in a proton gradient. The sequence is that of NADH-quinone oxidoreductase subunit D from Dechloromonas aromatica (strain RCB).